Consider the following 459-residue polypeptide: N-chimaerin (459 aa).

A2 is subject to N-acetylalanine. The SH2 domain occupies 49 to 135; it reads EYHGMISREE…IETKAAEYIA (87 aa). T192 carries the post-translational modification Phosphothreonine. The Phorbol-ester/DAG-type zinc finger occupies 205–255; it reads VHNFKVHTFRGPHWCEYCANFMWGLIAQGVKCADCGLNVHKQCSKMVPNDC. A Rho-GAP domain is found at 268-459; it reads CDLTTLVKAH…LLIKNEDILF (192 aa). T340 is subject to Phosphothreonine.

As to quaternary structure, interacts with EPHA4; effector of EPHA4 in axon guidance linking EPHA4 activation to RAC1 regulation. May also interact with EPHB1 and EPHB2. In terms of processing, phosphorylated. Phosphorylation is EPHA4 kinase activity-dependent.

GTPase-activating protein for p21-rac and a phorbol ester receptor. May play an important role in neuronal signal-transduction mechanisms. Involved in the assembly of neuronal locomotor circuits as a direct effector of EPHA4 in axon guidance. The protein is N-chimaerin (Chn1) of Mus musculus (Mouse).